The following is a 154-amino-acid chain: Putative pre-16S rRNA nuclease (154 aa).

Belongs to the YqgF nuclease family.

The protein localises to the cytoplasm. Its function is as follows. Could be a nuclease involved in processing of the 5'-end of pre-16S rRNA. This is Putative pre-16S rRNA nuclease from Pelotomaculum thermopropionicum (strain DSM 13744 / JCM 10971 / SI).